The sequence spans 331 residues: MSRQLSRARPATVLGAMEMGRRMDAPTSAAVTRAFLERGHTEIDTAFLYSDGQSETILGGLGLRMGSSDCRVKIATKANPWIGNSLKPDSVRSQLETSLKRLQCPRVDLFYLHAPDHSAPVEETLRACHQLHQEGKFVELGLSNYAAWEVAEICTLCKSNGWILPTVYQGMYSATTRQVETELFPCLRHFGLRFYAYNPLAGGLLTGKYKYEDKDGKQPVGRFFGTQWAEIYRNHFWKEHHFEGIALVEKALQAAYGASAPSMTSAALRWMYHHSQLQGAHGDAVILGMSSLEQLEQNLAAAEEGPLEPAVVDAFNQAWHLFAHECPNYFI.

An NADP(+)-binding site is contributed by Asp-44. The active-site Proton donor is Tyr-49. Residue Ser-85 is modified to Phosphoserine. Position 113 (His-113) interacts with substrate. NADP(+) is bound by residues 143 to 144, Gln-169, 198 to 208, and Arg-222; these read SN and NPLAGGLLTGK. Residue Tyr-232 coordinates substrate. An NADP(+)-binding site is contributed by 290–298; that stretch reads SSLEQLEQN.

It belongs to the aldo/keto reductase family. Aldo/keto reductase 2 subfamily. Mainly expressed in uterus.

In terms of biological role, can reduce the dialdehyde protein-binding form of aflatoxin B1 (AFB1) to the non-binding AFB1 dialcohol. May be involved in protection of liver against the toxic and carcinogenic effects of AFB1, a potent hepatocarcinogen. The polypeptide is Aflatoxin B1 aldehyde reductase member 4 (AKR7L) (Homo sapiens (Human)).